A 161-amino-acid polypeptide reads, in one-letter code: Thy-1 membrane glycoprotein (161 aa).

Residues 1–19 (MNPVISITLLLSVLQMSRG) form the signal peptide. Gln20 bears the Pyrrolidone carboxylic acid mark. Positions 20–126 (QRVISLTACL…NKTINVIRDK (107 aa)) constitute an Ig-like V-type domain. Cystine bridges form between Cys28–Cys130 and Cys38–Cys104. Asn42 is a glycosylation site (N-linked (GlcNAc...) (complex) asparagine; alternate). N-linked (GlcNAc...) (high mannose) asparagine; alternate glycosylation is present at Asn42. The N-linked (GlcNAc...) asparagine; alternate glycan is linked to Asn42. Ser82 carries the phosphoserine modification. A glycan (N-linked (GlcNAc...) (complex) asparagine; alternate) is linked at Asn93. Asn93 carries an N-linked (GlcNAc...) asparagine; alternate glycan. The N-linked (GlcNAc...) (high mannose) asparagine; in brain; alternate glycan is linked to Asn117. Residue Asn117 is glycosylated (N-linked (GlcNAc...) (hybrid) asparagine; in brain; alternate). Cys130 carries the GPI-anchor amidated cysteine lipid modification. A propeptide spans 131–161 (GGISLLVQNTSWLLLLLLSLSFLQATDFISL) (removed in mature form).

In terms of processing, glycosylation is tissue specific. Sialylation of N-glycans at Asn-93 in brain and at Asn-42, Asn-93 and Asn-117 in thymus. In terms of tissue distribution, abundant in lymphoid tissues.

It localises to the cell membrane. May play a role in cell-cell or cell-ligand interactions during synaptogenesis and other events in the brain. This is Thy-1 membrane glycoprotein (Thy1) from Rattus norvegicus (Rat).